A 490-amino-acid chain; its full sequence is Tryptophan 5-hydroxylase 2 (490 aa).

Phosphoserine is present on Ser-19. The tract at residues 34–62 (LTLNKANSGKNDDKGNKGSSKNETATESG) is disordered. The span at 50-62 (KGSSKNETATESG) shows a compositional bias: polar residues. In terms of domain architecture, ACT spans 65–140 (AVVFSLKNEV…TIVTLNPPEN (76 aa)). Fe cation-binding residues include His-318, His-323, and Glu-363.

Belongs to the biopterin-dependent aromatic amino acid hydroxylase family. In terms of assembly, interacts with DNAJC12. Requires Fe(2+) as cofactor.

It carries out the reaction (6R)-L-erythro-5,6,7,8-tetrahydrobiopterin + L-tryptophan + O2 = 5-hydroxy-L-tryptophan + (4aS,6R)-4a-hydroxy-L-erythro-5,6,7,8-tetrahydrobiopterin. Its pathway is aromatic compound metabolism; serotonin biosynthesis; serotonin from L-tryptophan: step 1/2. The polypeptide is Tryptophan 5-hydroxylase 2 (TPH2) (Macaca mulatta (Rhesus macaque)).